We begin with the raw amino-acid sequence, 1304 residues long: DNA-directed RNA polymerase subunit beta' (1304 aa).

Positions 1–23 (MSEKGRFSAGLSRQAADGNKADA) are disordered. Cys-241, Cys-315, Cys-322, and Cys-325 together coordinate Zn(2+). Residues 1256–1268 (AAEPEPDEEEEEP) show a composition bias toward acidic residues. Positions 1256-1304 (AAEPEPDEEEEEPAVLPELPPRLILEDDQLIDDSTPAFDELEEDDDEEE) are disordered. A compositionally biased stretch (low complexity) spans 1269 to 1278 (AVLPELPPRL). Residues 1294–1304 (DELEEDDDEEE) are compositionally biased toward acidic residues.

It belongs to the RNA polymerase beta' chain family. RpoC2 subfamily. As to quaternary structure, in cyanobacteria the RNAP catalytic core is composed of 2 alpha, 1 beta, 1 beta', 1 gamma and 1 omega subunit. When a sigma factor is associated with the core the holoenzyme is formed, which can initiate transcription. Zn(2+) serves as cofactor.

The catalysed reaction is RNA(n) + a ribonucleoside 5'-triphosphate = RNA(n+1) + diphosphate. DNA-dependent RNA polymerase catalyzes the transcription of DNA into RNA using the four ribonucleoside triphosphates as substrates. The chain is DNA-directed RNA polymerase subunit beta' from Synechococcus sp. (strain JA-2-3B'a(2-13)) (Cyanobacteria bacterium Yellowstone B-Prime).